Reading from the N-terminus, the 338-residue chain is uncharacterized protein (338 aa).

Positions 1–29 are cleaved as a signal peptide; sequence MIKQLYKNITICTLALSTTFTVLPATSYA.

It belongs to the aerolysin family.

This is an uncharacterized protein from Staphylococcus aureus (strain MSSA476).